A 1016-amino-acid polypeptide reads, in one-letter code: DNA polymerase I (1016 aa).

Residues 1 to 308 (MPNSIWTSSD…MEFTTLTRRV (308 aa)) enclose the 5'-3' exonuclease domain. A disordered region spans residues 334–361 (GPDLDAAEPEPVAGGIPEVSGESVPMPP). The 237-residue stretch at 394–630 (SAYVTIRDLV…MEARGITVDR (237 aa)) folds into the 3'-5' exonuclease domain. A polymerase region spans residues 768–1016 (GRKIRTAFIS…RAATNWDEAH (249 aa)).

Belongs to the DNA polymerase type-A family. In terms of assembly, single-chain monomer with multiple functions.

It carries out the reaction DNA(n) + a 2'-deoxyribonucleoside 5'-triphosphate = DNA(n+1) + diphosphate. Its function is as follows. In addition to polymerase activity, this DNA polymerase exhibits 3'-5' and 5'-3' exonuclease activity. The polypeptide is DNA polymerase I (polA) (Rhizobium leguminosarum).